Consider the following 170-residue polypeptide: Small ribosomal subunit protein bS16 (170 aa).

A disordered region spans residues 114-170 (EGGPTTEAAKPKKKAATSGAKKAAKAAEPEAAAPEAAEPEAAAPAEGGEQAESSTES). Residues 142 to 170 (PEAAAPEAAEPEAAAPAEGGEQAESSTES) are compositionally biased toward low complexity.

The protein belongs to the bacterial ribosomal protein bS16 family.

The chain is Small ribosomal subunit protein bS16 from Mycobacterium avium (strain 104).